Here is a 122-residue protein sequence, read N- to C-terminus: Large ribosomal subunit protein uL14 (122 aa).

This sequence belongs to the universal ribosomal protein uL14 family. As to quaternary structure, part of the 50S ribosomal subunit. Forms a cluster with proteins L3 and L19. In the 70S ribosome, L14 and L19 interact and together make contacts with the 16S rRNA in bridges B5 and B8.

Binds to 23S rRNA. Forms part of two intersubunit bridges in the 70S ribosome. The sequence is that of Large ribosomal subunit protein uL14 from Alkaliphilus metalliredigens (strain QYMF).